A 332-amino-acid polypeptide reads, in one-letter code: Holliday junction branch migration complex subunit RuvB (332 aa).

The segment at 1–182 (MNKNFIESNL…FAFTCRLEYY (182 aa)) is large ATPase domain (RuvB-L). ATP is bound by residues leucine 21, arginine 22, glycine 63, lysine 66, threonine 67, threonine 68, 129-131 (EDF), arginine 172, tyrosine 182, and arginine 219. Residue threonine 67 coordinates Mg(2+). Positions 183 to 253 (DPMILQKILL…VANRALTMLS (71 aa)) are small ATPAse domain (RuvB-S). Residues 256–332 (EKGLDEMDKK…YQHIVGSSQR (77 aa)) form a head domain (RuvB-H) region. DNA contacts are provided by arginine 311 and arginine 316.

The protein belongs to the RuvB family. Homohexamer. Forms an RuvA(8)-RuvB(12)-Holliday junction (HJ) complex. HJ DNA is sandwiched between 2 RuvA tetramers; dsDNA enters through RuvA and exits via RuvB. An RuvB hexamer assembles on each DNA strand where it exits the tetramer. Each RuvB hexamer is contacted by two RuvA subunits (via domain III) on 2 adjacent RuvB subunits; this complex drives branch migration. In the full resolvosome a probable DNA-RuvA(4)-RuvB(12)-RuvC(2) complex forms which resolves the HJ.

Its subcellular location is the cytoplasm. It catalyses the reaction ATP + H2O = ADP + phosphate + H(+). In terms of biological role, the RuvA-RuvB-RuvC complex processes Holliday junction (HJ) DNA during genetic recombination and DNA repair, while the RuvA-RuvB complex plays an important role in the rescue of blocked DNA replication forks via replication fork reversal (RFR). RuvA specifically binds to HJ cruciform DNA, conferring on it an open structure. The RuvB hexamer acts as an ATP-dependent pump, pulling dsDNA into and through the RuvAB complex. RuvB forms 2 homohexamers on either side of HJ DNA bound by 1 or 2 RuvA tetramers; 4 subunits per hexamer contact DNA at a time. Coordinated motions by a converter formed by DNA-disengaged RuvB subunits stimulates ATP hydrolysis and nucleotide exchange. Immobilization of the converter enables RuvB to convert the ATP-contained energy into a lever motion, pulling 2 nucleotides of DNA out of the RuvA tetramer per ATP hydrolyzed, thus driving DNA branch migration. The RuvB motors rotate together with the DNA substrate, which together with the progressing nucleotide cycle form the mechanistic basis for DNA recombination by continuous HJ branch migration. Branch migration allows RuvC to scan DNA until it finds its consensus sequence, where it cleaves and resolves cruciform DNA. This is Holliday junction branch migration complex subunit RuvB from Protochlamydia amoebophila (strain UWE25).